We begin with the raw amino-acid sequence, 298 residues long: ATP synthase gamma chain (298 aa).

Belongs to the ATPase gamma chain family. In terms of assembly, F-type ATPases have 2 components, CF(1) - the catalytic core - and CF(0) - the membrane proton channel. CF(1) has five subunits: alpha(3), beta(3), gamma(1), delta(1), epsilon(1). CF(0) has three main subunits: a, b and c.

Its subcellular location is the cell inner membrane. Functionally, produces ATP from ADP in the presence of a proton gradient across the membrane. The gamma chain is believed to be important in regulating ATPase activity and the flow of protons through the CF(0) complex. In Albidiferax ferrireducens (strain ATCC BAA-621 / DSM 15236 / T118) (Rhodoferax ferrireducens), this protein is ATP synthase gamma chain.